The chain runs to 368 residues: Cyanide hydratase (368 aa).

Residues 6 to 285 (YKAAVVTSEP…DGLMYVDIDL (280 aa)) form the CN hydrolase domain. Glu46 serves as the catalytic Proton acceptor. The active site involves Lys128. Cys163 (nucleophile) is an active-site residue. A disordered region spans residues 341-368 (LDRPLEEEDYRQGTDAGETEKASSNGHA).

The protein belongs to the carbon-nitrogen hydrolase superfamily. Nitrilase family. Oligomer of dimers, forming left-handed helical fibers.

It catalyses the reaction formamide = hydrogen cyanide + H2O. Catalyzes the hydration of cyanide to formamide. Degradation of cyanide may be important for plant pathogenic fungi in infection of cyanogenic plants. The chain is Cyanide hydratase from Microdochium sorghi (Zonate leaf spot disease fungus).